Reading from the N-terminus, the 44-residue chain is Thymosin beta (44 aa).

Positions 1–44 (MSDKHDKPDISEVTKFDKSKLKKTETHEKNPLPTKETIDQEKQG) are disordered. Serine 2 carries the post-translational modification N-acetylserine.

As to expression, expressed in regenerating axons.

Its subcellular location is the cytoplasm. It localises to the cytoskeleton. Functionally, plays an important role in the organization of the cytoskeleton. Binds to and sequesters actin monomers (G actin) and therefore inhibits actin polymerization. May be involved in the regulation of structural plasticity in the CNS. This is Thymosin beta from Aplysia californica (California sea hare).